Reading from the N-terminus, the 391-residue chain is Anhydro-N-acetylmuramic acid kinase (391 aa).

ATP is bound at residue 9–16 (GTSYDAVE).

The protein belongs to the anhydro-N-acetylmuramic acid kinase family.

The catalysed reaction is 1,6-anhydro-N-acetyl-beta-muramate + ATP + H2O = N-acetyl-D-muramate 6-phosphate + ADP + H(+). It functions in the pathway amino-sugar metabolism; 1,6-anhydro-N-acetylmuramate degradation. The protein operates within cell wall biogenesis; peptidoglycan recycling. Its function is as follows. Catalyzes the specific phosphorylation of 1,6-anhydro-N-acetylmuramic acid (anhMurNAc) with the simultaneous cleavage of the 1,6-anhydro ring, generating MurNAc-6-P. Is required for the utilization of anhMurNAc either imported from the medium or derived from its own cell wall murein, and thus plays a role in cell wall recycling. This chain is Anhydro-N-acetylmuramic acid kinase, found in Streptomyces coelicolor (strain ATCC BAA-471 / A3(2) / M145).